Consider the following 138-residue polypeptide: Acidic phospholipase A2 daboiatoxin A chain (138 aa).

The N-terminal stretch at 1 to 16 is a signal peptide; that stretch reads MRTLWIMAVCLIGVEG. Disulfide bonds link C42–C131, C44–C60, C59–C111, C65–C138, C66–C104, C73–C97, and C91–C102. Ca(2+) contacts are provided by Y43, G45, and G47. Residue H63 is part of the active site. D64 serves as a coordination point for Ca(2+). Residue D105 is part of the active site.

It belongs to the phospholipase A2 family. Group II subfamily. D49 sub-subfamily. Heterodimer of A and B chain; non-covalently linked. The acidic protein (B chain) has phospholipase A2 activity and the A chain weakly inhibits the B chain enzymatic activity but potentiates its lethal potency. Requires Ca(2+) as cofactor. Expressed by the venom gland.

It is found in the secreted. The catalysed reaction is a 1,2-diacyl-sn-glycero-3-phosphocholine + H2O = a 1-acyl-sn-glycero-3-phosphocholine + a fatty acid + H(+). In terms of biological role, heterodimer (A and B chains): phospholipase A2 that acts as a presynaptic neurotoxin and shows a PLA2 activity of 1377 umol/min/mg. In vivo, induces edema and produces neurotoxic symptoms in mice. Also exhibits indirect hemolysis, a strong myonecrotic activity and cytotoxicity. PLA2 catalyzes the calcium-dependent hydrolysis of the 2-acyl groups in 3-sn-phosphoglycerides. Its function is as follows. Monomer: Snake venom phospholipase A2 (PLA2) that shows a PLA2 activity of 578 umol/min/mg. The protein is Acidic phospholipase A2 daboiatoxin A chain of Daboia siamensis (Eastern Russel's viper).